Reading from the N-terminus, the 215-residue chain is Nascent polypeptide-associated complex subunit alpha-2 (215 aa).

The tract at residues 1-51 (MPGEATETVPATEQELPQSQAETGSGTASDSGESVPGIEEQDSTQTTTQKA) is disordered. Residues 9–32 (VPATEQELPQSQAETGSGTASDSG) show a composition bias toward polar residues. Residues serine 43 and serine 132 each carry the phosphoserine modification. The 66-residue stretch at 70–135 (SRSEKRARKA…AKIQDLSQQA (66 aa)) folds into the NAC-A/B domain. Lysine 142 carries the post-translational modification N6-acetyllysine; alternate. A Glycyl lysine isopeptide (Lys-Gly) (interchain with G-Cter in SUMO2); alternate cross-link involves residue lysine 142. The residue at position 161 (threonine 161) is a Phosphothreonine. Phosphoserine occurs at positions 166, 186, 191, and 203. The region spanning 176 to 213 (VEVKDVKLVMSQANVSRAKAVRALKNNSNDIVNAIMEL) is the UBA domain. Threonine 214 carries the phosphothreonine modification.

Belongs to the NAC-alpha family. In terms of assembly, part of the nascent polypeptide-associated complex (NAC), consisting of NACA and BTF3. NAC associates with ribosomes through the BTF3 subunit. Both subunits can contact nascent polypeptide chains. Expressed specifically in testis and skeletal muscle.

The protein resides in the cytoplasm. Its subcellular location is the nucleus. Its function is as follows. Prevents inappropriate targeting of non-secretory polypeptides to the endoplasmic reticulum (ER). Binds to nascent polypeptide chains as they emerge from the ribosome and blocks their interaction with the signal recognition particle (SRP), which normally targets nascent secretory peptides to the ER. Also reduces the inherent affinity of ribosomes for protein translocation sites in the ER membrane (M sites). This is Nascent polypeptide-associated complex subunit alpha-2 (NACA2) from Homo sapiens (Human).